Reading from the N-terminus, the 98-residue chain is Acylphosphatase (98 aa).

Positions 12 to 98 (TYYVRVRGVV…EKRFERFQQQ (87 aa)) constitute an Acylphosphatase-like domain. Active-site residues include arginine 27 and asparagine 45.

This sequence belongs to the acylphosphatase family.

It carries out the reaction an acyl phosphate + H2O = a carboxylate + phosphate + H(+). The polypeptide is Acylphosphatase (acyP) (Burkholderia cenocepacia (strain HI2424)).